We begin with the raw amino-acid sequence, 1342 residues long: DNA-directed RNA polymerase subunit beta (1342 aa).

Belongs to the RNA polymerase beta chain family. In terms of assembly, the RNAP catalytic core consists of 2 alpha, 1 beta, 1 beta' and 1 omega subunit. When a sigma factor is associated with the core the holoenzyme is formed, which can initiate transcription.

It carries out the reaction RNA(n) + a ribonucleoside 5'-triphosphate = RNA(n+1) + diphosphate. Its function is as follows. DNA-dependent RNA polymerase catalyzes the transcription of DNA into RNA using the four ribonucleoside triphosphates as substrates. This Cronobacter sakazakii (strain ATCC BAA-894) (Enterobacter sakazakii) protein is DNA-directed RNA polymerase subunit beta.